The primary structure comprises 195 residues: Xanthine phosphoribosyltransferase (195 aa).

Leu-20 and Asn-27 together coordinate xanthine. Position 128-132 (128-132) interacts with 5-phospho-alpha-D-ribose 1-diphosphate; the sequence is ANGQA. Lys-156 contributes to the xanthine binding site.

The protein belongs to the purine/pyrimidine phosphoribosyltransferase family. Xpt subfamily. Homodimer.

It localises to the cytoplasm. It catalyses the reaction XMP + diphosphate = xanthine + 5-phospho-alpha-D-ribose 1-diphosphate. It functions in the pathway purine metabolism; XMP biosynthesis via salvage pathway; XMP from xanthine: step 1/1. Functionally, converts the preformed base xanthine, a product of nucleic acid breakdown, to xanthosine 5'-monophosphate (XMP), so it can be reused for RNA or DNA synthesis. In Limosilactobacillus fermentum (strain NBRC 3956 / LMG 18251) (Lactobacillus fermentum), this protein is Xanthine phosphoribosyltransferase.